Consider the following 284-residue polypeptide: MRLIIVSGRSGSGKSTALDVLEDNGFYCIDNLPAGLLPQLAEDALINTELLQPKVAVSIDARNLPSHLTRFPELLEEARARNIQCDVLFLDADEDMLLKRFSETRRRHPLTNANRSLAEAIRVESDLLGPIADLADLKIDTTNLNLYQLRDSIKLRLLNQPEPGTAFLVESFGFKRGMPVDADLVFDVRCLPNPYWKPELREHSGLDQPVIDYLAAQPDVEDMYNDISGYLLKWLPRFAASNRAYVTIAIGCTGGHHRSVYITERLGQHLQQTLKNVQVRHRDL.

8–15 provides a ligand contact to ATP; sequence GRSGSGKS. Residue 60–63 participates in GTP binding; it reads DARN.

This sequence belongs to the RapZ-like family.

Displays ATPase and GTPase activities. This Pseudomonas putida (strain GB-1) protein is Nucleotide-binding protein PputGB1_0956.